A 191-amino-acid polypeptide reads, in one-letter code: MKQLCCSCLLWLGLLLTPFSREEEEESRPRKLCGRHLLIEVIKLCGQSDWSRFEMEEQSPMTQFFPHYSRKGKAFNPHPSSSAWRRFTNPVPAGVSQKKGTHTWEPQSLPDYQFEKTELLPKARVFSYHSGKPYVKSVQLQKKSTNKMNTFRSLFWGNHSQRKRRGFADKCCVIGCTKEEMAVACLPFVDF.

The signal sequence occupies residues 1 to 22 (MKQLCCSCLLWLGLLLTPFSRE). Disulfide bonds link C33–C172, C45–C185, and C171–C176. Residues 53–161 (FEMEEQSPMT…RSLFWGNHSQ (109 aa)) constitute a propeptide, connecting peptide.

The protein belongs to the insulin family.

It is found in the secreted. Its function is as follows. May have a role in sperm development and fertilization. This is Insulin-like peptide INSL6 (Insl6) from Mus musculus (Mouse).